The following is a 66-amino-acid chain: Large ribosomal subunit protein bL35 (66 aa).

Residues 1–44 (MPKLKSHRGAAKRFRKTASGAIKRRGAYRNHILTKKSTKQKRHL) show a composition bias toward basic residues. Positions 1–48 (MPKLKSHRGAAKRFRKTASGAIKRRGAYRNHILTKKSTKQKRHLRVEA) are disordered.

It belongs to the bacterial ribosomal protein bL35 family.

The sequence is that of Large ribosomal subunit protein bL35 from Legionella pneumophila (strain Corby).